A 465-amino-acid polypeptide reads, in one-letter code: Serine/threonine-protein kinase 38 (465 aa).

At Ala2 the chain carries N-acetylalanine. Residues 62–87 are interaction with S100B; the sequence is KRLRRSAHARKETEFLRLKRTRLGLE. The residue at position 74 (Thr74) is a Phosphothreonine. A Protein kinase domain is found at 89-382; sequence FESLKVIGRG…VEEIKSNSFF (294 aa). ATP contacts are provided by residues 95–103 and Lys118; that span reads IGRGAFGEV. Residue Asp212 is the Proton acceptor of the active site. Position 264 is a phosphoserine (Ser264). Phosphoserine; by autocatalysis is present on Ser281. The UFM1-interacting motif (UFIM) signature appears at 306–311; the sequence is WSLGVI. One can recognise an AGC-kinase C-terminal domain in the interval 383 to 455; the sequence is EGVDWEHIRE…KRFEGLTARG (73 aa). Thr444 is modified (phosphothreonine; by STK24/MST3).

It belongs to the protein kinase superfamily. AGC Ser/Thr protein kinase family. Homodimeric S100B binds two molecules of STK38. Interacts with MOB1 and MOB2. Interacts with MAP3K1 and MAP3K2 (via the kinase catalytic domain). Forms a tripartite complex with MOBKL1B and STK3/MST2. Interacts with MICAL1; leading to inhibit the protein kinase activity by antagonizing activation by MST1/STK4. Mg(2+) is required as a cofactor. ISGylated. Post-translationally, phosphorylated by STK3/MST2 and this is enhanced by MOBKL1B. As to expression, ubiquitously expressed with highest levels observed in peripheral blood leukocytes.

The protein resides in the nucleus. It localises to the cytoplasm. Its subcellular location is the chromosome. The catalysed reaction is L-seryl-[protein] + ATP = O-phospho-L-seryl-[protein] + ADP + H(+). The enzyme catalyses L-threonyl-[protein] + ATP = O-phospho-L-threonyl-[protein] + ADP + H(+). Its activity is regulated as follows. Activated by binding of S100B which releases autoinhibitory N-lobe interactions, enabling ATP to bind and the autophosphorylation of Ser-281. Thr-444 then undergoes calcium-dependent phosphorylation by STK24/MST3. Interactions between phosphorylated Thr-444 and the N-lobe promote additional structural changes that complete the activation of the kinase. Autoinhibition is also released by the binding of MOB1/MOBKL1A and MOB2/HCCA2 to the N-terminal of STK38. Serine/threonine-protein kinase that acts as a negative regulator of MAP3K1/2 signaling. Converts MAP3K2 from its phosphorylated form to its non-phosphorylated form and inhibits autophosphorylation of MAP3K2. Acts as an ufmylation 'reader' in a kinase-independent manner: specifically recognizes and binds mono-ufmylated histone H4 in response to DNA damage, promoting the recruitment of SUV39H1 to the double-strand breaks, resulting in ATM activation. The chain is Serine/threonine-protein kinase 38 from Homo sapiens (Human).